Reading from the N-terminus, the 145-residue chain is Small ribosomal subunit protein uS19 (145 aa).

A2 carries the N-acetylalanine modification. A Glycyl lysine isopeptide (Lys-Gly) (interchain with G-Cter in SUMO2) cross-link involves residue K108.

Belongs to the universal ribosomal protein uS19 family. In terms of assembly, component of the small ribosomal subunit.

The protein localises to the cytoplasm. Functionally, component of the small ribosomal subunit. The ribosome is a large ribonucleoprotein complex responsible for the synthesis of proteins in the cell. This Bos taurus (Bovine) protein is Small ribosomal subunit protein uS19 (RPS15).